The chain runs to 31 residues: Palustrin-2c (31 aa).

A disulfide bridge links cysteine 23 with cysteine 29.

As to expression, expressed by the skin glands.

The protein resides in the secreted. Functionally, antimicrobial activity against Gram-negative bacterium E.coli. The polypeptide is Palustrin-2c (Lithobates palustris (Pickerel frog)).